We begin with the raw amino-acid sequence, 425 residues long: UDP-N-acetylglucosamine 1-carboxyvinyltransferase (425 aa).

Position 23-24 (Lys23–Asn24) interacts with phosphoenolpyruvate. Residue Arg100 coordinates UDP-N-acetyl-alpha-D-glucosamine. Cys124 functions as the Proton donor in the catalytic mechanism. Cys124 bears the 2-(S-cysteinyl)pyruvic acid O-phosphothioketal mark. UDP-N-acetyl-alpha-D-glucosamine contacts are provided by residues Lys169–Val172, Asp313, and Val335.

The protein belongs to the EPSP synthase family. MurA subfamily.

The protein localises to the cytoplasm. It carries out the reaction phosphoenolpyruvate + UDP-N-acetyl-alpha-D-glucosamine = UDP-N-acetyl-3-O-(1-carboxyvinyl)-alpha-D-glucosamine + phosphate. The protein operates within cell wall biogenesis; peptidoglycan biosynthesis. In terms of biological role, cell wall formation. Adds enolpyruvyl to UDP-N-acetylglucosamine. This chain is UDP-N-acetylglucosamine 1-carboxyvinyltransferase, found in Wolbachia pipientis subsp. Culex pipiens (strain wPip).